A 360-amino-acid chain; its full sequence is 3-dehydroquinate synthase (360 aa).

Residues 69-74 (DGEKYK), 103-107 (GVVGD), 127-128 (TT), Lys-140, Lys-149, and 167-170 (TLDT) each bind NAD(+). Zn(2+) contacts are provided by Glu-182, His-246, and His-263.

This sequence belongs to the sugar phosphate cyclases superfamily. Dehydroquinate synthase family. The cofactor is Co(2+). Zn(2+) is required as a cofactor. Requires NAD(+) as cofactor.

It localises to the cytoplasm. The enzyme catalyses 7-phospho-2-dehydro-3-deoxy-D-arabino-heptonate = 3-dehydroquinate + phosphate. It participates in metabolic intermediate biosynthesis; chorismate biosynthesis; chorismate from D-erythrose 4-phosphate and phosphoenolpyruvate: step 2/7. Functionally, catalyzes the conversion of 3-deoxy-D-arabino-heptulosonate 7-phosphate (DAHP) to dehydroquinate (DHQ). In Vesicomyosocius okutanii subsp. Calyptogena okutanii (strain HA), this protein is 3-dehydroquinate synthase.